A 209-amino-acid chain; its full sequence is Large ribosomal subunit protein bL9 (209 aa).

Residues 184 to 209 (SAASEDSDLVETPEDRATEEAEDEQP) are disordered.

Belongs to the bacterial ribosomal protein bL9 family.

Functionally, binds to the 23S rRNA. The sequence is that of Large ribosomal subunit protein bL9 from Dinoroseobacter shibae (strain DSM 16493 / NCIMB 14021 / DFL 12).